The following is a 426-amino-acid chain: Proline--tRNA ligase (426 aa).

The protein belongs to the class-II aminoacyl-tRNA synthetase family. ProS type 2 subfamily. Homodimer.

The protein resides in the cytoplasm. It carries out the reaction tRNA(Pro) + L-proline + ATP = L-prolyl-tRNA(Pro) + AMP + diphosphate. Catalyzes the attachment of proline to tRNA(Pro) in a two-step reaction: proline is first activated by ATP to form Pro-AMP and then transferred to the acceptor end of tRNA(Pro). The protein is Proline--tRNA ligase of Anaplasma phagocytophilum (strain HZ).